The following is a 352-amino-acid chain: Probable protein phosphatase 2C 56 (352 aa).

Disordered regions lie at residues 18–37 and 53–87; these read RGRR…ASRG and SSSS…ITGG. Composition is skewed to low complexity over residues 23 to 37 and 53 to 75; these read AASP…ASRG and SSSS…ARTR. In terms of domain architecture, PPM-type phosphatase spans 96 to 343; that stretch reads SWDYSSFKGR…DNITCIVLQF (248 aa). Mn(2+)-binding residues include aspartate 132, glycine 133, aspartate 295, and aspartate 334.

This sequence belongs to the PP2C family. It depends on Mg(2+) as a cofactor. Mn(2+) is required as a cofactor.

It catalyses the reaction O-phospho-L-seryl-[protein] + H2O = L-seryl-[protein] + phosphate. The catalysed reaction is O-phospho-L-threonyl-[protein] + H2O = L-threonyl-[protein] + phosphate. This is Probable protein phosphatase 2C 56 from Oryza sativa subsp. japonica (Rice).